Reading from the N-terminus, the 219-residue chain is MPVFYTPIPQNLRVGLANVSGSVFINNRTRDSADFKDHYLENEACAEVSSHLPLQMMLYFNMFFFPFWWISELLMLQLKFSYLPVYYQCLLVTGMVLISIFEVLRMYLGYAGNLKEKVPELAGFWLISFLFQLPILLFFITDPDIIILPLERAVHSLYLAFLLGELMASFLALRVMTRKLAQQFHMRQFGHVQGLHTAEALPMFGLPYGGRSVLPVQDI.

2 N-linked (GlcNAc...) asparagine glycosylation sites follow: asparagine 18 and asparagine 27. 4 helical membrane-spanning segments follow: residues methionine 56–leucine 76, leucine 83–valine 103, leucine 121–threonine 141, and alanine 153–leucine 173.

It belongs to the TMEM17 family. Part of the tectonic-like complex (also named B9 complex).

It localises to the cell projection. The protein localises to the cilium membrane. Transmembrane component of the tectonic-like complex, a complex localized at the transition zone of primary cilia and acting as a barrier that prevents diffusion of transmembrane proteins between the cilia and plasma membranes. Required for ciliogenesis and sonic hedgehog/SHH signaling. This is Transmembrane protein 17A (tmem17a) from Danio rerio (Zebrafish).